The sequence spans 114 residues: DNA-directed RNA polymerases II, IV and V subunit 9B (114 aa).

8 residues coordinate Zn(2+): Cys-7, Cys-10, Cys-29, Cys-32, Cys-76, Cys-79, Cys-103, and Cys-108. A TFIIS-type zinc finger spans residues 72 to 113 (KAVRCAKCQHGEAVFFQATARGEEGMTLFFVCCNPNCSHRWR).

This sequence belongs to the archaeal RpoM/eukaryotic RPA12/RPB9/RPC11 RNA polymerase family. Component of the RNA polymerase II, IV and V complexes. Interacts with NRPD1.

Its subcellular location is the nucleus. It is found in the nucleolus. DNA-dependent RNA polymerase catalyzes the transcription of DNA into RNA using the four ribonucleoside triphosphates as substrates. Component of RNA polymerase II which synthesizes mRNA precursors and many functional non-coding RNAs. Pol II is the central component of the basal RNA polymerase II transcription machinery. It is composed of mobile elements that move relative to each other. Component of RNA polymerases IV and V which mediate short-interfering RNAs (siRNA) accumulation and subsequent RNA-directed DNA methylation-dependent (RdDM) transcriptional gene silencing (TGS) of endogenous repeated sequences, including transposable elements. Required for RNA silencing. This is DNA-directed RNA polymerases II, IV and V subunit 9B (NRPB9B) from Arabidopsis thaliana (Mouse-ear cress).